Consider the following 317-residue polypeptide: Porphobilinogen deaminase (317 aa).

C240 bears the S-(dipyrrolylmethanemethyl)cysteine mark.

This sequence belongs to the HMBS family. Monomer. Dipyrromethane serves as cofactor.

It carries out the reaction 4 porphobilinogen + H2O = hydroxymethylbilane + 4 NH4(+). The protein operates within porphyrin-containing compound metabolism; protoporphyrin-IX biosynthesis; coproporphyrinogen-III from 5-aminolevulinate: step 2/4. Functionally, tetrapolymerization of the monopyrrole PBG into the hydroxymethylbilane pre-uroporphyrinogen in several discrete steps. The sequence is that of Porphobilinogen deaminase from Nitratidesulfovibrio vulgaris (strain DSM 19637 / Miyazaki F) (Desulfovibrio vulgaris).